Consider the following 245-residue polypeptide: GTP cyclohydrolase 1 type 2 homolog (245 aa).

Histidine 63, histidine 64, aspartate 100, histidine 213, and glutamate 217 together coordinate a divalent metal cation.

The protein belongs to the GTP cyclohydrolase I type 2/NIF3 family. Homohexamer.

This Archaeoglobus fulgidus (strain ATCC 49558 / DSM 4304 / JCM 9628 / NBRC 100126 / VC-16) protein is GTP cyclohydrolase 1 type 2 homolog.